We begin with the raw amino-acid sequence, 60 residues long: Large ribosomal subunit protein uL30 (60 aa).

It belongs to the universal ribosomal protein uL30 family. In terms of assembly, part of the 50S ribosomal subunit.

In Kineococcus radiotolerans (strain ATCC BAA-149 / DSM 14245 / SRS30216), this protein is Large ribosomal subunit protein uL30.